The primary structure comprises 181 residues: MTTITLVQGDITRQHADALVNAANSSLLGGGGVDGAIHRRGGPAILAECRALRASRYGEGLPTGRAVATTAGDLDARWVIHTVGPVWSSTEDRSDLLASCYRESLRLAGELGARTVAFPALSTGVYRWPMGDAARIAVETVRTTPTAVEEVRFVLFDTHAYDTFARELGDAGHAGHAGHPG.

The region spanning 1-172 (MTTITLVQGD…TFARELGDAG (172 aa)) is the Macro domain.

This sequence belongs to the MacroD-type family.

This is Macro domain-containing protein in sno 5'region from Streptomyces nogalater.